We begin with the raw amino-acid sequence, 40 residues long: Photosystem II reaction center protein J (40 aa).

The helical transmembrane segment at 8-28 threads the bilayer; that stretch reads IPLWIIGTVAGIPVIGLIGIF.

The protein belongs to the PsbJ family. PSII is composed of 1 copy each of membrane proteins PsbA, PsbB, PsbC, PsbD, PsbE, PsbF, PsbH, PsbI, PsbJ, PsbK, PsbL, PsbM, PsbT, PsbX, PsbY, PsbZ, Psb30/Ycf12, at least 3 peripheral proteins of the oxygen-evolving complex and a large number of cofactors. It forms dimeric complexes.

The protein resides in the plastid. It is found in the chloroplast thylakoid membrane. Functionally, one of the components of the core complex of photosystem II (PSII). PSII is a light-driven water:plastoquinone oxidoreductase that uses light energy to abstract electrons from H(2)O, generating O(2) and a proton gradient subsequently used for ATP formation. It consists of a core antenna complex that captures photons, and an electron transfer chain that converts photonic excitation into a charge separation. This chain is Photosystem II reaction center protein J, found in Pelargonium hortorum (Common geranium).